Here is a 531-residue protein sequence, read N- to C-terminus: Aspartate--tRNA ligase, cytoplasmic (531 aa).

Residues 1–45 (MADAAEGEQPKLSKKELNKLARKAKKDEKAGEKGGNQQQAAAMDQ) form a disordered region. Positions 8–32 (EQPKLSKKELNKLARKAKKDEKAGE) are enriched in basic and acidic residues. Glu-259 lines the L-aspartate pocket. The segment at 281–284 (QLYK) is aspartate. Position 303 (Arg-303) interacts with L-aspartate. ATP is bound by residues 303-305 (RAE), 311-313 (RHM), and Glu-454. L-aspartate is bound by residues Ser-457 and Arg-461. An ATP-binding site is contributed by 502–505 (GLER).

It belongs to the class-II aminoacyl-tRNA synthetase family. Type 2 subfamily. In terms of assembly, homodimer.

The protein localises to the cytoplasm. It carries out the reaction tRNA(Asp) + L-aspartate + ATP = L-aspartyl-tRNA(Asp) + AMP + diphosphate. The polypeptide is Aspartate--tRNA ligase, cytoplasmic (Caenorhabditis elegans).